The primary structure comprises 157 residues: Small ribosomal subunit protein uS7 (157 aa).

The protein belongs to the universal ribosomal protein uS7 family. Part of the 30S ribosomal subunit. Contacts proteins S9 and S11.

Functionally, one of the primary rRNA binding proteins, it binds directly to 16S rRNA where it nucleates assembly of the head domain of the 30S subunit. Is located at the subunit interface close to the decoding center, probably blocks exit of the E-site tRNA. This is Small ribosomal subunit protein uS7 from Borrelia duttonii (strain Ly).